The primary structure comprises 148 residues: Receptor activity-modifying protein 1 (148 aa).

The signal sequence occupies residues 1–26 (MARALCRLPRRGLWLLLAHHLFMTTA). Intrachain disulfides connect Cys27/Cys82, Cys40/Cys72, and Cys57/Cys104. Topologically, residues 27 to 118 (CQEANYGALL…RAVRDPPGSI (92 aa)) are extracellular. Residues 119–140 (LYPFIVVPITVTLLVTALVVWQ) form a helical membrane-spanning segment. The Cytoplasmic portion of the chain corresponds to 141 to 148 (SKRTEGIV).

The protein belongs to the RAMP family. In terms of assembly, heterodimer of CALCRL and RAMP1; the interaction induces allosteric modulation of CALCRL function and CGRP1/CALCA and CGRP2/CALCB ligand specificity. Heterodimer of CALCR and RAMP1; interaction forms the AMYR1 receptor complex for amylin/IAPP and CGRP1/CALCA ligands. In terms of tissue distribution, expressed in many tissues including the uterus, bladder, brain, pancreas and gastro-intestinal tract.

The protein localises to the cell membrane. Functionally, accessory protein that interacts with and modulates the function of G-protein coupled receptors including calcitonin gene-related peptide type 1 receptor (CALCRL) and calcitonin receptor (CALCR). Required for the transport of CALCRL to the plasma membrane. Together with CALCRL, form the receptor complex for the calcitonin gene-related peptides CGRP1/CALCA and CGRP2/CALCB. Together with CALCR, form the AMYR1 receptor complex for amylin/IAPP and CGRP1/CALCA. The polypeptide is Receptor activity-modifying protein 1 (Homo sapiens (Human)).